The following is a 180-amino-acid chain: Probable DNA-directed RNA polymerase subunit delta (180 aa).

Positions 14–81 (LSMIEVARAI…GHNVWALRSW (68 aa)) constitute an HTH HARE-type domain. The tract at residues 89 to 180 (EEVNHPEDEE…HQDDLDDDDE (92 aa)) is disordered. Residues 115 to 163 (DSDDDDIIDYDSDDPEDEDLDVDEEDTNEDDYSDDDLDDADDNELDDGI) are compositionally biased toward acidic residues.

The protein belongs to the RpoE family. RNAP is composed of a core of 2 alpha, a beta and a beta' subunits. The core is associated with a delta subunit and one of several sigma factors.

Functionally, participates in both the initiation and recycling phases of transcription. In the presence of the delta subunit, RNAP displays an increased specificity of transcription, a decreased affinity for nucleic acids, and an increased efficiency of RNA synthesis because of enhanced recycling. In Lactobacillus johnsonii (strain CNCM I-12250 / La1 / NCC 533), this protein is Probable DNA-directed RNA polymerase subunit delta.